The primary structure comprises 959 residues: MSDSKKPTPEKSKYPVNLLDTPFPMRGDLPKREPLWVKQWQDKQLYKKIRAARKGAKKFILHDGPPYANGDLHIGHAVNKILKDMVIKARGLTGLDAVYVPGWDCHGMPIEIQIEKQFGKGLPVKEVQEKARAYATGQIARQKADFERLGVLGDWADPYLTMNFRNEADEVRALGKILEKGYVFRGLKPVNWCFDCGSALAEAEVEYADRTDLSIDVGFPFADIDALASAFHVGADVLKAKPGWIVIWTTTPWTIPSNQALNLHPEIEYALVDTSRGLLIVAKERVEACLQSWKLEGTVLATCEGAALNGVRFHHPLAKMDAGYDRTSPVYLGDYVTIDTGTGIVHSAPAYGVEDFQSCKAHNMPDSEIINPVMGNGVYASTLPLFGGQMIWDANPKIVEVLRESGNLFDAHKYAHSYMHCWRHKTPIIYRATSQWFAGMDVQPNDGNATLRETALAGIDATAFYPSWGKQRLHNMIANRPDWTLSRQRQWGVPMAFFVHKETGALHPRTPELLEQVAQRIEKSGIEAWQTLDPRELLGDEADMYEKNRDTLDVWFDSGTTHWHVIRGSHAADLYDASADLPDGRLADLYLEGSDQHRGWFHSSLLTASMLYGKPPYKGLLTHGFTVDGEGRKMSKSIGNTIAPQEIANKMGAEIIRLWVASTDYSGELAISDEILKRVVEGYRRIRNTLRFLLANLTDYDHAKHALPTEQWLEIDRYAVALTDALQKEVLSHYDVYEFHPVVAKLQTFCSEDLGGFYLDVLKDRLYTTAPDSVARRSAQNALYHITQAMLHWMAPFLSFTAEEAWQVFAHGTEHTDTIFTSTYYNAPVPQGASALLEKWAAIRNVRGEVTKQLEALRIDGKIGSSLQAEVTVSAGESVHDALASLGDDLRFVLITSAAKLERAPEGGDLLITVVPSTHSKCERCWHYRADVGHDHAHPTLCKRCTDNLFGSGEQRSAA.

The 'HIGH' region signature appears at 66–76; that stretch reads PYANGDLHIGH. L-isoleucyl-5'-AMP is bound at residue E592. The 'KMSKS' region motif lies at 633–637; that stretch reads KMSKS. K636 lines the ATP pocket. Residues C922, C925, C942, and C945 each contribute to the Zn(2+) site.

It belongs to the class-I aminoacyl-tRNA synthetase family. IleS type 1 subfamily. Monomer. Requires Zn(2+) as cofactor.

It localises to the cytoplasm. The catalysed reaction is tRNA(Ile) + L-isoleucine + ATP = L-isoleucyl-tRNA(Ile) + AMP + diphosphate. In terms of biological role, catalyzes the attachment of isoleucine to tRNA(Ile). As IleRS can inadvertently accommodate and process structurally similar amino acids such as valine, to avoid such errors it has two additional distinct tRNA(Ile)-dependent editing activities. One activity is designated as 'pretransfer' editing and involves the hydrolysis of activated Val-AMP. The other activity is designated 'posttransfer' editing and involves deacylation of mischarged Val-tRNA(Ile). This Ralstonia pickettii (strain 12J) protein is Isoleucine--tRNA ligase.